The following is a 153-amino-acid chain: Small ribosomal subunit protein uS11 (153 aa).

Belongs to the universal ribosomal protein uS11 family.

In Chlamydomonas reinhardtii (Chlamydomonas smithii), this protein is Small ribosomal subunit protein uS11 (RPS14).